A 311-amino-acid chain; its full sequence is GTP cyclohydrolase MptA (311 aa).

This sequence belongs to the GTP cyclohydrolase IV family. As to quaternary structure, homodimer. The cofactor is Fe(2+).

It catalyses the reaction GTP + H2O = 7,8-dihydroneopterin 2',3'-cyclic phosphate + formate + diphosphate + H(+). Its pathway is cofactor biosynthesis; 5,6,7,8-tetrahydromethanopterin biosynthesis. Its function is as follows. Converts GTP to 7,8-dihydro-D-neopterin 2',3'-cyclic phosphate, the first intermediate in the biosynthesis of coenzyme methanopterin. The sequence is that of GTP cyclohydrolase MptA from Methanobrevibacter smithii (strain ATCC 35061 / DSM 861 / OCM 144 / PS).